We begin with the raw amino-acid sequence, 252 residues long: Protein TRANSPARENT TESTA 16 (252 aa).

Positions 1 to 61 (MGRGKIEIKK…GKLSEFCSEQ (61 aa)) constitute an MADS-box domain. Residues 86–176 (QEQLHHEMEL…YRWLHEHRAA (91 aa)) enclose the K-box domain. A coiled-coil region spans residues 121–174 (NELDGLERQLEHSVLKVRERKNELMQQQLENLSRKRRMLEEDNNNMYRWLHEHR).

As to quaternary structure, interacts with AP1/AGL7, SEP1/AGL2, SEP2/AGL4, SEP3/AGL9 and AGL3/SEP4. In terms of tissue distribution, expressed in buds, flowers and immature seeds, but not in roots, stems, leaves, seedlings or siliques valves. Expression in seed coat is confined to the endothelium layer.

Its subcellular location is the nucleus. Functionally, transcription factor involved in the developmental regulation of the endothelium and in the accumulation of proanthocyanidins (PAs) or condensed tannins which give the seed its brown pigmentation after oxidation. Necessary for the normal activation of the BANYULS promoter in the endothelium body. Is required, together with AGL11/STK for the maternal control of endothelium formation, which is essential for female gametophyte development and fertilization, and seed formation. Interacts genetically with AGL1/SHP1 and AGL5/SHP2 in a partially antagonistic manner and represses AGL1/SHP1, AGL5/SHP2, and AGL8/FUL during flower development. Is essential for the coordination of cell divisions in ovule, seed coat development and endosperm formation. Mediates the crosstalk between endothelium and nucellus to ensure proper seed formation. Functions redundantly with AGL63/GOA to repress nucellus growth and promote its degeneration. Represses the negative regulator of autophagy and programmed cell death HVA22D in the proximal nucellus. Binds specifically to the CArG box DNA sequence 5'-CC (A/T)6 GG-3'. In Arabidopsis thaliana (Mouse-ear cress), this protein is Protein TRANSPARENT TESTA 16 (TT16).